Reading from the N-terminus, the 104-residue chain is MNDTEFHQLVDAQMQLIEESIDDSGADIDYEVTGNVMTLEFEDRSQIIINRQEPMHEIWLASKSGGFHFKLVDNKWTCSKTGMELIAMVKEECEKHAGETIDWA.

This sequence belongs to the frataxin family.

Involved in iron-sulfur (Fe-S) cluster assembly. May act as a regulator of Fe-S biogenesis. This Vibrio campbellii (strain ATCC BAA-1116) protein is Iron-sulfur cluster assembly protein CyaY.